Reading from the N-terminus, the 728-residue chain is 1,4-alpha-glucan branching enzyme GlgB (728 aa).

The Nucleophile role is filled by aspartate 409. The Proton donor role is filled by glutamate 462.

This sequence belongs to the glycosyl hydrolase 13 family. GlgB subfamily. As to quaternary structure, monomer.

The catalysed reaction is Transfers a segment of a (1-&gt;4)-alpha-D-glucan chain to a primary hydroxy group in a similar glucan chain.. Its pathway is glycan biosynthesis; glycogen biosynthesis. Functionally, catalyzes the formation of the alpha-1,6-glucosidic linkages in glycogen by scission of a 1,4-alpha-linked oligosaccharide from growing alpha-1,4-glucan chains and the subsequent attachment of the oligosaccharide to the alpha-1,6 position. The polypeptide is 1,4-alpha-glucan branching enzyme GlgB (Cereibacter sphaeroides (strain ATCC 17023 / DSM 158 / JCM 6121 / CCUG 31486 / LMG 2827 / NBRC 12203 / NCIMB 8253 / ATH 2.4.1.) (Rhodobacter sphaeroides)).